The chain runs to 809 residues: Ubiquitin carboxyl-terminal hydrolase 1 (809 aa).

In terms of domain architecture, USP spans 101 to 738; the sequence is AGLVNDGNTC…GVFMLFYEYD (638 aa). Catalysis depends on Cys-110, which acts as the Nucleophile. Residues 143–195 form a disordered region; the sequence is NEHNEEGNGQESAQDEATHKKNTRKGGKVYGKHKKKLNRKSSSKEDEEKSQEP. Positions 162–183 are enriched in basic residues; that stretch reads KKNTRKGGKVYGKHKKKLNRKS. Residues 184-194 are compositionally biased toward basic and acidic residues; it reads SSKEDEEKSQE. Phosphoserine is present on residues Ser-530, Ser-531, and Ser-555. Positions 569 to 596 are disordered; sequence ASHYNHTKDISNYDPLNGEVDGVTSDDE. Phosphoserine occurs at positions 618 and 638. A Phosphothreonine modification is found at Thr-652. Ser-653, Ser-654, and Ser-670 each carry phosphoserine. His-697 (proton acceptor) is an active-site residue. The tract at residues 750-809 is disordered; it reads LEAIQSNNEEDDEKEQEQKGVQEPKESQEQGEGEEQEEGQEQMKFERTEDHRDISGKDVN. The residue at position 755 (Ser-755) is a Phosphoserine. A compositionally biased stretch (basic and acidic residues) spans 765–777; it reads QEQKGVQEPKESQ. Residues 778–789 are compositionally biased toward acidic residues; the sequence is EQGEGEEQEEGQ. Residues 790-809 are compositionally biased toward basic and acidic residues; the sequence is EQMKFERTEDHRDISGKDVN.

This sequence belongs to the peptidase C19 family.

It carries out the reaction Thiol-dependent hydrolysis of ester, thioester, amide, peptide and isopeptide bonds formed by the C-terminal Gly of ubiquitin (a 76-residue protein attached to proteins as an intracellular targeting signal).. Its function is as follows. Has an ATP-independent isopeptidase activity, cleaving at the C-terminus of the ubiquitin moiety in natural or engineered linear fusion proteins, irrespective of their size or the presence of an N-terminal extension to ubiquitin. The sequence is that of Ubiquitin carboxyl-terminal hydrolase 1 (UBP1) from Saccharomyces cerevisiae (strain ATCC 204508 / S288c) (Baker's yeast).